The chain runs to 137 residues: Large ribosomal subunit protein uL16 (137 aa).

It belongs to the universal ribosomal protein uL16 family. In terms of assembly, part of the 50S ribosomal subunit.

Binds 23S rRNA and is also seen to make contacts with the A and possibly P site tRNAs. The protein is Large ribosomal subunit protein uL16 of Rhizobium etli (strain CIAT 652).